The chain runs to 312 residues: uncharacterized protein (312 aa).

The next 10 helical transmembrane spans lie at 11-31, 46-66, 72-92, 98-118, 128-148, 155-171, 183-203, 221-241, 254-274, and 277-297; these read IAAI…KIAL, IAFA…SIRV, ILPL…FGLV, EAGI…AYVL, GFTV…GVDV, GSLL…MYNT, TELT…IALV, PGFV…TSFL, MSAF…VILN, and LAWY…GSNI. 2 EamA domains span residues 18–142 and 164–297; these read FIIG…FIFV and LSSA…GSNI.

This sequence belongs to the EamA transporter family.

The protein resides in the cell membrane. This is an uncharacterized protein from Bacillus subtilis (strain 168).